A 246-amino-acid polypeptide reads, in one-letter code: Putative outer membrane protein YiaT (246 aa).

The first 21 residues, 1–21 (MLINRNIVALFALPFMASATA), serve as a signal peptide directing secretion.

It belongs to the MipA/OmpV family.

The protein localises to the cell outer membrane. This chain is Putative outer membrane protein YiaT (yiaT), found in Escherichia coli O157:H7.